We begin with the raw amino-acid sequence, 533 residues long: DNA-directed RNA polymerase III subunit RPC3 (533 aa).

The segment at leucine 162 to valine 181 is disordered. Residue serine 194 is modified to Phosphoserine. The disordered stretch occupies residues glycine 197–proline 228. Over residues glycine 211–serine 227 the composition is skewed to basic and acidic residues.

It belongs to the eukaryotic RPC3/POLR3C RNA polymerase subunit family. In terms of assembly, component of the RNA polymerase III complex consisting of 17 subunits: a ten-subunit horseshoe-shaped catalytic core composed of POLR3A/RPC1, POLR3B/RPC2, POLR1C/RPAC1, POLR1D/RPAC2, POLR3K/RPC10, POLR2E/RPABC1, POLR2F/RPABC2, POLR2H/RPABC3, POLR2K/RPABC4 and POLR2L/RPABC5; a mobile stalk composed of two subunits POLR3H/RPC8 and CRCP/RPC9, protruding from the core and functioning primarily in transcription initiation; and additional subunits homologous to general transcription factors of the RNA polymerase II machinery, POLR3C/RPC3-POLR3F/RPC6-POLR3G/RPC7 heterotrimer required for transcription initiation and POLR3D/RPC4-POLR3E/RPC5 heterodimer involved in both transcription initiation and termination. Directly interacts with POLR3G/RPC7 and POLR3GL. Directly interacts with POLR3F/RPC6. Interacts with GTF3C4. As part of the RNA polymerase III complex, interacts with PKP2.

Its subcellular location is the nucleus. Its function is as follows. DNA-dependent RNA polymerase catalyzes the transcription of DNA into RNA using the four ribonucleoside triphosphates as substrates. Specific peripheric component of RNA polymerase III (Pol III) which synthesizes small non-coding RNAs including 5S rRNA, snRNAs, tRNAs and miRNAs from at least 500 distinct genomic loci. Part of POLR3C/RPC3-POLR3F/RPC6-POLR3G/RPC7 heterotrimer, coordinates the dynamics of Pol III stalk and clamp modules during the transition from apo to elongation state. Pol III plays a key role in sensing and limiting infection by intracellular bacteria and DNA viruses. Acts as a nuclear and cytosolic DNA sensor involved in innate immune response. Can sense non-self dsDNA that serves as template for transcription into dsRNA. The non-self RNA polymerase III transcripts, such as Epstein-Barr virus-encoded RNAs (EBERs) induce type I interferon and NF-kappa-B through the RIG-I pathway. Preferentially binds single-stranded DNA (ssDNA) in a sequence-independent manner. This chain is DNA-directed RNA polymerase III subunit RPC3, found in Mus musculus (Mouse).